The chain runs to 100 residues: Putative PIN1-like protein (100 aa).

Basic and acidic residues predominate over residues 1–15 (MADEEKLPPGWEKRM). 2 disordered regions span residues 1-52 (MADE…QGEP) and 69-100 (LDLA…REGL). The 34-residue stretch at 5–38 (EKLPPGWEKRMSRPSGRGYYFNHITNPSQWERPS) folds into the WW domain. Over residues 27-44 (HITNPSQWERPSGNSSSG) the composition is skewed to polar residues. Residues 87 to 100 (QRLHPEDQGRREGL) are compositionally biased toward basic and acidic residues.

The sequence is that of Putative PIN1-like protein (PIN1P1) from Homo sapiens (Human).